The chain runs to 467 residues: 3-isopropylmalate dehydratase large subunit (467 aa).

Residues cysteine 349, cysteine 409, and cysteine 412 each coordinate [4Fe-4S] cluster.

It belongs to the aconitase/IPM isomerase family. LeuC type 1 subfamily. Heterodimer of LeuC and LeuD. The cofactor is [4Fe-4S] cluster.

The enzyme catalyses (2R,3S)-3-isopropylmalate = (2S)-2-isopropylmalate. The protein operates within amino-acid biosynthesis; L-leucine biosynthesis; L-leucine from 3-methyl-2-oxobutanoate: step 2/4. In terms of biological role, catalyzes the isomerization between 2-isopropylmalate and 3-isopropylmalate, via the formation of 2-isopropylmaleate. The polypeptide is 3-isopropylmalate dehydratase large subunit (Vibrio cholerae serotype O1 (strain ATCC 39541 / Classical Ogawa 395 / O395)).